A 721-amino-acid polypeptide reads, in one-letter code: Ribonucleoside-diphosphate reductase subunit alpha (721 aa).

Residues Thr-159, 175–176 (SC), Gly-204, 384–388 (NLCSE), and 589–593 (PTGSI) each bind substrate. A disulfide bond links Cys-176 and Cys-413. Residue Asn-384 is the Proton acceptor of the active site. Catalysis depends on Cys-386, which acts as the Cysteine radical intermediate. The Proton acceptor role is filled by Glu-388.

The protein belongs to the ribonucleoside diphosphate reductase large chain family. As to quaternary structure, tetramer of two alpha and two beta subunits.

The catalysed reaction is a 2'-deoxyribonucleoside 5'-diphosphate + [thioredoxin]-disulfide + H2O = a ribonucleoside 5'-diphosphate + [thioredoxin]-dithiol. Its activity is regulated as follows. Under complex allosteric control mediated by deoxynucleoside triphosphates and ATP binding. The type of nucleotide bound at the specificity site determines substrate preference. It seems probable that ATP makes the enzyme reduce CDP and UDP, dGTP favors ADP reduction and dTTP favors GDP reduction. Functionally, provides the precursors necessary for DNA synthesis. Catalyzes the biosynthesis of deoxyribonucleotides from the corresponding ribonucleotides. This is Ribonucleoside-diphosphate reductase subunit alpha (nrdE) from Mycoplasma genitalium (strain ATCC 33530 / DSM 19775 / NCTC 10195 / G37) (Mycoplasmoides genitalium).